The primary structure comprises 292 residues: Poly(U)-specific endoribonuclease-B (292 aa).

The 278-residue stretch at 8 to 285 folds into the EndoU domain; that stretch reads VNHELSKLFN…IGTAYPALLS (278 aa). Residues H162, H178, and K224 contribute to the active site.

This sequence belongs to the ENDOU family. As to quaternary structure, monomer. Mn(2+) is required as a cofactor.

The protein localises to the nucleus. The catalysed reaction is uridylyl-uridylyl-ribonucleotide-RNA = a 3'-end uridylyl-2',3'-cyclophospho-uridine-RNA + a 5'-end dephospho-ribonucleoside-RNA. In terms of biological role, poly(U)-specific endoribonuclease involved in the processing of intron-encoded box C/D snoRNAs, such as U16 and U86. Releases products that have 2',3'-cyclic phosphate termini at the 3'-end. The polypeptide is Poly(U)-specific endoribonuclease-B (endou-b) (Xenopus laevis (African clawed frog)).